The primary structure comprises 326 residues: Bifunctional pinoresinol-lariciresinol reductase (326 aa).

NADP(+) contacts are provided by residues 25 to 31 (GGTGYLG), arginine 50, and lysine 59. Lysine 153 serves as the catalytic Proton acceptor. NADP(+) is bound at residue arginine 157. Histidine 285 contacts substrate.

Belongs to the NmrA-type oxidoreductase family. Isoflavone reductase subfamily. Dimer.

The catalysed reaction is (+)-lariciresinol + NADP(+) = (+)-pinoresinol + NADPH + H(+). It carries out the reaction (-)-secoisolariciresinol + NADP(+) = (+)-lariciresinol + NADPH + H(+). Its function is as follows. Reductase involved in lignan biosynthesis. Catalyzes the enantioselective conversion of (+)-pinoresinol into (+)-lariciresinol and of (+)-lariciresinol into (-)-secoisolariciresinol. Abstracts the 4R-hydride from the NADPH cofactor during catalysis. In Linum album (Flax), this protein is Bifunctional pinoresinol-lariciresinol reductase (PLR1).